Here is a 551-residue protein sequence, read N- to C-terminus: Calcium-dependent protein kinase 19 (551 aa).

Glycine 2 is lipidated: N-myristoyl glycine. The interval 12 to 46 is disordered; it reads VKKPTPDISGEQNTEVKSREITPKEQPRQRQPAPR. The segment covering 25–39 has biased composition (basic and acidic residues); that stretch reads TEVKSREITPKEQPR. In terms of domain architecture, Protein kinase spans 98-357; the sequence is YSLGRELGRG…AAQVLEHPWI (260 aa). Residues 104-112 and lysine 127 contribute to the ATP site; that span reads LGRGQFGIT. The active-site Proton acceptor is the aspartate 222. The residue at position 263 (serine 263) is a Phosphoserine. Residues 363–393 form an autoinhibitory domain region; that stretch reads ASDKPIDSAVLSRMKQLRAMNKLKKLAFKFI. 4 consecutive EF-hand domains span residues 400–435, 436–471, 472–507, and 512–542; these read EELK…LGSR, LTET…RFRV, ERED…YNMG, and IKEI…CSQS. Ca(2+)-binding residues include aspartate 413, aspartate 415, serine 417, threonine 419, glutamate 424, aspartate 449, aspartate 451, asparagine 453, threonine 455, glutamate 460, aspartate 485, aspartate 487, serine 489, glutamate 496, aspartate 520, aspartate 522, aspartate 524, serine 526, and glutamate 531.

Belongs to the protein kinase superfamily. Ser/Thr protein kinase family. CDPK subfamily.

The protein resides in the membrane. It catalyses the reaction L-seryl-[protein] + ATP = O-phospho-L-seryl-[protein] + ADP + H(+). It carries out the reaction L-threonyl-[protein] + ATP = O-phospho-L-threonyl-[protein] + ADP + H(+). With respect to regulation, activated by calcium. Autophosphorylation may play an important role in the regulation of the kinase activity. May play a role in signal transduction pathways that involve calcium as a second messenger. This Arabidopsis thaliana (Mouse-ear cress) protein is Calcium-dependent protein kinase 19 (CPK19).